The primary structure comprises 1791 residues: MQESQTKSMFVSRALEKILADKEVKRPQHSQLRRACQVALDEIKAELEKQRLGAAAPPKANFIEADKYFLPFELACQSKSPRVVSTSLDCLQKLIAYGHITGNAPDSGAPGKRLIDRIVETVCNCFQGPQTDEGVQLQIIKALLTAVTSPHIEIHEGTILQTVRTCYNIYLASKNLINQTTAKATLTQMLNVIFTRMENQVLQEARELEKPIQSKPQSPVIQATAGSPKFSRLKQSQAQSKPTTPEKTELPNGDHARSSLGKVNSENGEAHRERGSSISGRAEPSGGSDNGAQEVVKDILEDVVTSAVKEAAEKQGLPEPDQAPGVPECQECTVPPAVDENSQTNGIADDRQSLSSADNLEPDAQGHPVAARFSHILQKDAFLVFRSLCKLSMKPLGEGPPDPKSHELRSKVVSLQLLLSVLQNAGPVFRSHEMFVTAIKQYLCVALSKNGVSSVPDVFELSLAIFLTLLSNFKMHLKMQIEVFFKEIFLNILETSTSSFEHRWMVIQTLTRICADAQCVVDIYVNYDCDLNAANIFERLVNDLSKIAQGRSGHELGMTPLQELSLRKKGLECLVSILKCMVEWSKDLYVNPNHQATLGQERLPDQEMGDGKGLDMARRCSVTSVESTVSSGTQTAIPDDPEQFEVIKQQKEIIEHGIELFNKKPKRGIQFLQEQGMLGAAVEDIAQFLHQEERLDSTQVGEFLGDSTRFNKEVMYAYVDQLDFCEKEFVSALRTFLEGFRLPGEAQKIDRLMEKFAARYIECNQGQTLFASADTAYVLAYSIIMLTTDLHSPQVKNKMTKEQYIKMNRGINDSKDLPEEYLSSIYEEIEGKKIAMKETKEHTMATKSTKQNVASEKQRRLLYNVEMEQMAKTAKALMEAVSHAKAPFTSATHLDHVRPMFKLVWTPLLAAYSIGLQNCDDTEVASLCLEGIRCAVRIACIFGMQLERDAYVQALARFSLLTASSSITEMKQKNIDTIKTLITVAHTDGNYLGNSWHEILKCISQLELAQLIGTGVKTRYLSGSGREREGSLKGHSLAGEEFMGLGLGNLVSGGVDKRQMASFQESVGETSSQSVVVAVDRIFTGSTRLDGNAIVDFVRWLCAVSMDELASPHHPRMFSLQKIVEISYYNMNRIRLQWSRIWHVIGDHFNKVGCNPNEDVAIFAVDSLRQLSMKFLEKGELANFRFQKDFLRPFEHIMKKNRSPTIRDMVIRCIAQMVSSQAANIRSGWKNIFAVFHQAASDHDGNIVELAFQTTGHIVSTIFQHHFPAAIDSFQDAVKCLSEFACNAAFPDTSMEAIRLIRFCGKYVSERPRVLQEYTSDDMNVAPGDRVWVRGWFPILFELSCIINRCKLDVRTRGLTVMFEIMKSYGHTFAKHWWQDLFRIVFRIFDNMKLPEQQSEKSEWMTTTCNHALYAICDVFTQFYEALHEVLLSDVFAQLQWCVKQDNEQLARSGTNCLENLVISNGEKFSPAVWDETCNCMLDIFRTTIPHVLLTWRPAGMEEEVSDRHLDVDLDRQSLSSIDRNASERGQSQLSNPTDDSWKGAPYANQKLLASLLIKCVVQLELIQTIDNIVFYPATSKKEDAEHMVAAQQDTLDADIHIETENQGMYKFMSSQHLFKLLDCLQESHSFSKAFNSNYEQRTVLWRAGFKGKSKPNLLKQETSSLACCLRILFRMYVDENRRDSWGEIQQRLLTVCSEALAYFITVNSESHREAWTSLLLLLLTKTLKINDEKFKAHASVYYPYLCEMMQFDLIPELRAVLRKFFLRIGLVYKIWVPEEPSQVPAASTAW.

An N-acetylmethionine modification is found at methionine 1. The segment at 2 to 224 (QESQTKSMFV…KPQSPVIQAT (223 aa)) is DCB; DCB:DCB domain and DCB:HUS domain interaction. 2 disordered regions span residues 208–292 (LEKP…DNGA) and 311–350 (AAEK…IADD). Serine 214, serine 218, and serine 227 each carry phosphoserine. Residues 214–225 (SKPQSPVIQATA) show a composition bias toward polar residues. Positions 233–243 (LKQSQAQSKPT) are enriched in polar residues. Threonine 244 is subject to Phosphothreonine. The segment covering 244 to 257 (TPEKTELPNGDHAR) has biased composition (basic and acidic residues). Serine 277 bears the Phosphoserine mark. Phosphoserine is present on residues serine 355 and serine 356. The tract at residues 515 to 535 (ADAQCVVDIYVNYDCDLNAAN) is HUS; DCB:HUS domain interaction. Residue serine 621 is modified to Phosphoserine. Position 623 is a phosphothreonine (threonine 623). At serine 624 the chain carries Phosphoserine. Residue threonine 633 is modified to Phosphothreonine. One can recognise an SEC7 domain in the interval 661 to 792 (FNKKPKRGIQ…IIMLTTDLHS (132 aa)). 8 positions are modified to phosphoserine: serine 707, serine 1518, serine 1520, serine 1521, serine 1532, serine 1535, serine 1541, and serine 1788.

Homodimer. Interacts with ARFGEF1/BIG1; both proteins are probably part of the same or very similar macromolecular complexes. Interacts with PRKAR1A, PRKAR2A, PRKAR1B, PRKAR2B, PPP1CC, PDE3A, TNFRSF1A, MYCBP and EXOC7. Interacts with GABRB1, GABRB2 and GABRB3. Post-translationally, in vitro phosphorylated by PKA reducing its GEF activity and dephosphorylated by phosphatase PP1. As to expression, expressed in brain (at protein level).

It localises to the cytoplasm. The protein localises to the membrane. The protein resides in the golgi apparatus. It is found in the perinuclear region. Its subcellular location is the trans-Golgi network. It localises to the endosome. The protein localises to the cytoskeleton. The protein resides in the microtubule organizing center. It is found in the centrosome. Its subcellular location is the cell projection. It localises to the dendrite. The protein localises to the cytoplasmic vesicle. The protein resides in the synapse. Inhibited by brefeldin A. Its function is as follows. Promotes guanine-nucleotide exchange on ARF1 and ARF3 and to a lower extent on ARF5 and ARF6. Promotes the activation of ARF1/ARF5/ARF6 through replacement of GDP with GTP. Involved in the regulation of Golgi vesicular transport. Required for the integrity of the endosomal compartment. Involved in trafficking from the trans-Golgi network (TGN) to endosomes and is required for membrane association of the AP-1 complex and GGA1. Seems to be involved in recycling of the transferrin receptor from recycling endosomes to the plasma membrane. Probably is involved in the exit of GABA(A) receptors from the endoplasmic reticulum. Involved in constitutive release of tumor necrosis factor receptor 1 via exosome-like vesicles; the function seems to involve PKA and specifically PRKAR2B. Proposed to act as A kinase-anchoring protein (AKAP) and may mediate crosstalk between Arf and PKA pathways. The polypeptide is Brefeldin A-inhibited guanine nucleotide-exchange protein 2 (Arfgef2) (Rattus norvegicus (Rat)).